We begin with the raw amino-acid sequence, 122 residues long: MSITKEQILDAISEMSVMNIVELISDMEKKFGVSSIIPSSSTSTQNIETAEAKTEFDVLLKSIGGNKVSVIKAVRSATGLGLKEAKDLVESAPTIIKERITQDAAESLKKILNETGAEVEIK.

The protein belongs to the bacterial ribosomal protein bL12 family. In terms of assembly, homodimer. Part of the ribosomal stalk of the 50S ribosomal subunit. Forms a multimeric L10(L12)X complex, where L10 forms an elongated spine to which 2 to 4 L12 dimers bind in a sequential fashion. Binds GTP-bound translation factors.

Forms part of the ribosomal stalk which helps the ribosome interact with GTP-bound translation factors. Is thus essential for accurate translation. In Buchnera aphidicola subsp. Baizongia pistaciae (strain Bp), this protein is Large ribosomal subunit protein bL12.